A 66-amino-acid polypeptide reads, in one-letter code: Large ribosomal subunit protein bL33c (66 aa).

The protein belongs to the bacterial ribosomal protein bL33 family.

The protein resides in the plastid. Its subcellular location is the chloroplast. This Saccharum officinarum (Sugarcane) protein is Large ribosomal subunit protein bL33c.